A 476-amino-acid chain; its full sequence is Siroheme synthase (476 aa).

Residues 1 to 203 (MHYFPVFADL…RQTEAAKKEL (203 aa)) form a precorrin-2 dehydrogenase /sirohydrochlorin ferrochelatase region. NAD(+) contacts are provided by residues 22-23 (GV) and 43-44 (QK). A Phosphoserine modification is found at Ser128. The interval 214–476 (GFVSLVGAGP…LDSLRIESVA (263 aa)) is uroporphyrinogen-III C-methyltransferase. Residue Pro223 coordinates S-adenosyl-L-methionine. Residue Asp246 is the Proton acceptor of the active site. The active-site Proton donor is Lys268. S-adenosyl-L-methionine-binding positions include 299–301 (GGD), Val304, 329–330 (TA), Met381, and Gly410.

It in the N-terminal section; belongs to the precorrin-2 dehydrogenase / sirohydrochlorin ferrochelatase family. In the C-terminal section; belongs to the precorrin methyltransferase family.

The enzyme catalyses uroporphyrinogen III + 2 S-adenosyl-L-methionine = precorrin-2 + 2 S-adenosyl-L-homocysteine + H(+). It catalyses the reaction precorrin-2 + NAD(+) = sirohydrochlorin + NADH + 2 H(+). The catalysed reaction is siroheme + 2 H(+) = sirohydrochlorin + Fe(2+). It functions in the pathway cofactor biosynthesis; adenosylcobalamin biosynthesis; precorrin-2 from uroporphyrinogen III: step 1/1. The protein operates within cofactor biosynthesis; adenosylcobalamin biosynthesis; sirohydrochlorin from precorrin-2: step 1/1. It participates in porphyrin-containing compound metabolism; siroheme biosynthesis; precorrin-2 from uroporphyrinogen III: step 1/1. Its pathway is porphyrin-containing compound metabolism; siroheme biosynthesis; siroheme from sirohydrochlorin: step 1/1. It functions in the pathway porphyrin-containing compound metabolism; siroheme biosynthesis; sirohydrochlorin from precorrin-2: step 1/1. Its function is as follows. Multifunctional enzyme that catalyzes the SAM-dependent methylations of uroporphyrinogen III at position C-2 and C-7 to form precorrin-2 via precorrin-1. Then it catalyzes the NAD-dependent ring dehydrogenation of precorrin-2 to yield sirohydrochlorin. Finally, it catalyzes the ferrochelation of sirohydrochlorin to yield siroheme. The chain is Siroheme synthase from Actinobacillus succinogenes (strain ATCC 55618 / DSM 22257 / CCUG 43843 / 130Z).